Here is a 1488-residue protein sequence, read N- to C-terminus: MSESPSEPRAKRQRVDKNGRFAAMERLRQLKGTKNKCKVEDQVDDVYDVVDEREYAKRAQEKYGDDWIEEDGTGYAEDLRDFFEDEDEYSDGEEDRKDSKKKKGVAPNSKKRPRENEKPVTGKASIKNLFSNAVPKKMDVKTSVKDDDILADILGEIKEEPAATSEKAEKVIAPAKISVTSRKFDAAAAKEYMNSFLNNIKVQEQERKKAEASSDNEMLERILKPKAAVPNTKVAFFSSPTIKKEPMPEKTPAKKATEDPFSDNEMDFSCLDDDENQFDVEKTQQTEKVSQTKTAAEKTSQSKVAEKSAPKKETTGSPKESESEDISRLLNNWESICQMDDDFEKSVLTTEQDSTISSDQQLRFWYWEAYEDPVKMPGEVFLFGRTADGKSVCLRVQNINRVLYLLPRQFLLDPISKEPTKQKVTVADIYKEFDSEVANQLKLEFFRSRKVTKSFAHHAIGIEVPQSCDYLEVHYDGKKPLPNLSADKKYNSIAHIFGATTNALERFLLDRKIKGPCWLQVTGFKVSPTPMSWCNTEVTLTEPKNVELVQDKGKPAPPPPLTLLSLNVRTSMNPKTSRNEICMISMLTHNRFHIDRPAPQPAFNRHMCALTRPAVVSWPLDLNFEMAKYKSTTVHKHDSERALLSWFLAQYQKIDADLIVTFDSMDCQLNVITDQIVALKIPQWSRMGRLRLSQSFGKRLLEHFVGRMVCDVKRSAEECIRARSYDLQTLCKQVLKLKESERMEVNADDLLEMYEKGESITKLISLTMQDNSYLLRLMCELNIMPLALQITNICGNTMTRTLQGGRSERNEFLLLHAFHEKNYIVPDKKPVSKRSGAGDTDATLSGADATMQTKKKAAYAGGLVLEPMRGLYEKYVLLMDFNSLYPSIIQEYNICFTTVQQPVDADELPTLPDSKTEPGILPLQLKRLVESRKEVKKLMAAPDLSPELQMQYHIRQMALKLTANSMYGCLGFAHSRFFAQHLAALVTHKGREILTNTQQLVQKMNYDVVYGDTDSLMINTNITDYDQVYKIGHNIKQSVNKLYKQLELDIDGVFGCLLLLKKKKYAAIKLSKDSKGNLRREQEHKGLDIVRRDWSQLAVMVGKAVLDEVLSEKPLEEKLDAVHAQLEKIKTQIAEGVVPLPLFVITKQLTRTPQEYANSASLPHVQVALRMNRERNRRYKKGDMVDYVICLDGTTNAAMQRAYHLDELKTSEDKKLQLDTNYYLGHQIHPVVTRMVEVLEGTDASRIAECLGMDPTKFRQNAQRTQRENTEQSEGESLLKTTLQLYRLCEPFRFQCVTCKTEQLMASAYRPGPSNSHIAVLQQCAKSECQTAPIQYLASVRNQLQLSMRQYVQRFYKNWLVCDHPDCNFNTRTHSLRKKSHRPLCQKCRSGSLLRQYTERDLYNQLCYLRFMFDLGKQTLQQKPTLTPELEQAYQLLYETVDQQLQSSSYVIISLSKLFARSLAQMSLQPSVAQPQIEAIPSALADVV.

Disordered regions lie at residues 1–22, 79–124, and 236–325; these read MSES…GRFA, LRDF…TGKA, and FFSS…ESED. The span at 83 to 93 shows a compositional bias: acidic residues; it reads FEDEDEYSDGE. The Nuclear localization signal signature appears at 96-103; it reads RKDSKKKK. A compositionally biased stretch (basic residues) spans 99 to 113; the sequence is SKKKKGVAPNSKKRP. A Phosphoserine modification is found at Ser239. A compositionally biased stretch (basic and acidic residues) spans 242 to 258; that stretch reads IKKEPMPEKTPAKKATE. The span at 260–278 shows a compositional bias: acidic residues; it reads PFSDNEMDFSCLDDDENQF. Ser262 and Ser269 each carry phosphoserine. Positions 286 to 303 are enriched in polar residues; sequence TEKVSQTKTAAEKTSQSK. Positions 304–325 are enriched in basic and acidic residues; sequence VAEKSAPKKETTGSPKESESED. Position 314 is a phosphothreonine (Thr314). The residue at position 317 (Ser317) is a Phosphoserine. Positions 638–758 are contains conserved residues essential for 3' -&gt; 5' exonuclease activities; the sequence is DSERALLSWF…DLLEMYEKGE (121 aa). DNA-binding regions lie at residues 675–734 and 1255–1380; these read QIVA…CKQV and PTKF…RKKS. Residues Cys1296, Cys1299, Cys1324, Cys1329, Cys1362, Cys1367, Cys1385, and Cys1388 each coordinate Zn(2+). Residues 1296-1327 form a CysA-type zinc finger; sequence CVTCKTEQLMASAYRPGPSNSHIAVLQQCAKS. A CysB motif motif is present at residues 1362–1388; it reads CDHPDCNFNTRTHSLRKKSHRPLCQKC.

It belongs to the DNA polymerase type-B family. As to quaternary structure, component of the alpha DNA polymerase complex (also known as the alpha DNA polymerase-primase complex) consisting of four subunits: the catalytic subunit PolA1, the regulatory subunit PolA2, and the primase complex subunits Prim1 and Prim2 respectively. PolA1 associates with the DNA primase complex before association with PolA2. Interacts with Dpit47; the interaction inhibits the activity of the DNA polymerase and occurs only in proliferating cells but not in quiescent cells. Post-translationally, in embryos, a cleaved form of 130 kDa is produced up to cycle 14 and then disappears. In terms of tissue distribution, expressed in embryos (at protein level).

It is found in the nucleus. It carries out the reaction DNA(n) + a 2'-deoxyribonucleoside 5'-triphosphate = DNA(n+1) + diphosphate. Its activity is regulated as follows. Inhibited by N2-(p-n-butylphenyl) deoxyguanosine 5'-triphosphate and N2-(p-n-butylphenyl) deoxyadenosine 5'-triphosphate. DNA synthesis is not inhibited by fungal toxin alpha-amaitin. The 3'-5' exonuclease activity is inhibited by 10mM dGMP. In terms of biological role, catalytic subunit of the DNA polymerase alpha complex (also known as the alpha DNA polymerase-primase complex) which plays an essential role in the initiation of DNA synthesis. During the S phase of the cell cycle, the DNA polymerase alpha complex (composed of a catalytic subunit PolA1, an accessory subunit PolA2 and two primase subunits, the catalytic subunit Prim1 and the regulatory subunit Prim2) is recruited to DNA at the replicative forks. The primase subunit of the polymerase alpha complex initiates DNA synthesis by oligomerising short RNA primers on both leading and lagging strands. These primers are initially extended by the polymerase alpha catalytic subunit and subsequently transferred to polymerase delta and polymerase epsilon for processive synthesis on the lagging and leading strand, respectively. In addition to polymerase activity, exhibits 3' to 5' exonuclease activity. In Drosophila melanogaster (Fruit fly), this protein is DNA polymerase alpha catalytic subunit.